A 250-amino-acid chain; its full sequence is 5-oxoprolinase subunit A (250 aa).

This sequence belongs to the LamB/PxpA family. As to quaternary structure, forms a complex composed of PxpA, PxpB and PxpC.

It catalyses the reaction 5-oxo-L-proline + ATP + 2 H2O = L-glutamate + ADP + phosphate + H(+). Catalyzes the cleavage of 5-oxoproline to form L-glutamate coupled to the hydrolysis of ATP to ADP and inorganic phosphate. This is 5-oxoprolinase subunit A from Staphylococcus aureus (strain NCTC 8325 / PS 47).